The chain runs to 309 residues: Tagatose-6-phosphate kinase (309 aa).

This sequence belongs to the carbohydrate kinase PfkB family. LacC subfamily.

It catalyses the reaction D-tagatofuranose 6-phosphate + ATP = D-tagatofuranose 1,6-bisphosphate + ADP + H(+). Its pathway is carbohydrate metabolism; D-tagatose 6-phosphate degradation; D-glyceraldehyde 3-phosphate and glycerone phosphate from D-tagatose 6-phosphate: step 1/2. The protein is Tagatose-6-phosphate kinase of Streptococcus pyogenes serotype M5 (strain Manfredo).